The primary structure comprises 442 residues: GPI mannosyltransferase 1 (442 aa).

Helical transmembrane passes span 22–42 (INLTKSIFIVGLVIRLVLIVF), 95–115 (ILIHPAFGKLLFVICDMIIAY), 177–197 (LASIFYGLSVHFKIYPIIYSI), 242–262 (AFTFISLTFIMYLIYGYIFLF), 307–327 (MIVALASFLPQVILLLAITLV), 336–356 (LLLETITFVAFNKVCTVQYFI), 361–381 (ILPLVIPSSSLGLVQYIILFA), and 408–428 (IWVAGLLFFIANIYILVKLIL).

This sequence belongs to the PIGM family.

The protein localises to the endoplasmic reticulum membrane. The protein operates within glycolipid biosynthesis; glycosylphosphatidylinositol-anchor biosynthesis. Mannosyltransferase involved in glycosylphosphatidylinositol-anchor biosynthesis. Transfers the first alpha-1,4-mannose to GlcN-acyl-PI during GPI precursor assembly. The sequence is that of GPI mannosyltransferase 1 (pigm) from Dictyostelium discoideum (Social amoeba).